Here is a 280-residue protein sequence, read N- to C-terminus: Protein YIP4b (280 aa).

The segment covering 1 to 15 (MSHNDTIPLYQSSQS) has biased composition (polar residues). Residues 1 to 106 (MSHNDTIPLY…SGFGSPPNTL (106 aa)) form a disordered region. Residues 1 to 146 (MSHNDTIPLY…DPGKALRDWD (146 aa)) are Cytoplasmic-facing. Residues 147–167 (LWGPFFFIVFLGLTLSWSASV) form a helical membrane-spanning segment. At 168–171 (KKSE) the chain is on the lumenal side. Transmembrane regions (helical) follow at residues 172-192 (VFAVAFALLAAGAVILTLNVL) and 193-213 (LLGGHIIFFQSLSLLGYCLFP). Topologically, residues 214 to 230 (LDVGAVICMLKDNVILK) are lumenal. A helical transmembrane segment spans residues 231–251 (MVVVSVTLAWSSWAAYPFMSA). Over 252–258 (AVNPRRK) the chain is Cytoplasmic. Residues 259–279 (ALALYPVFLMYVSVGFLIIAI) form a helical membrane-spanning segment. Asn280 is a topological domain (lumenal).

The protein belongs to the YIP1 family. Homodimer and heterodimer with YIP4A. Component of a trans-Golgi network (TGN)-localized ECH/YIP4 complex made of ECH, YIP4A and YIP4B. Interacts directly with ECH. As to expression, expressed in developing root hair cells.

The protein resides in the golgi apparatus. The protein localises to the trans-Golgi network membrane. Together with YIP4A, involved in the regulation of cell elongation during root and hypocotyl growth. YIP4A and YIP4B are central trafficking components in Rho-of-plant (ROPs, e.g. ARAC4/ROP2, ARAC5/ROP4 and ARAC3/ROP6) small GTPases-dependent root hair formation, thus contributing to activation and plasma membrane accumulation of ROPs during hair initiation. The ECH/YIP4 complex is involved in the modulation of the trans-Golgi network (TGN)-mediated trafficking of some proteins and cell wall components (e.g. pectin and hemicellulose) to the cell wall in dark-grown hypocotyls and in secretory cells of the seed coat. In Arabidopsis thaliana (Mouse-ear cress), this protein is Protein YIP4b.